The sequence spans 62 residues: Large ribosomal subunit protein bL28 (62 aa).

This sequence belongs to the bacterial ribosomal protein bL28 family.

This chain is Large ribosomal subunit protein bL28, found in Thermoanaerobacter pseudethanolicus (strain ATCC 33223 / 39E) (Clostridium thermohydrosulfuricum).